The primary structure comprises 583 residues: Aspartate--tRNA ligase (583 aa).

Glu174 serves as a coordination point for L-aspartate. The segment at 198-201 is aspartate; that stretch reads QITK. Residue Arg220 coordinates L-aspartate. Residues 220–222 and Gln229 each bind ATP; that span reads RDE. His443 contributes to the L-aspartate binding site. Glu477 is an ATP binding site. Arg484 serves as a coordination point for L-aspartate. 529-532 lines the ATP pocket; that stretch reads GLDR.

This sequence belongs to the class-II aminoacyl-tRNA synthetase family. Type 1 subfamily. Homodimer.

It localises to the cytoplasm. It catalyses the reaction tRNA(Asp) + L-aspartate + ATP = L-aspartyl-tRNA(Asp) + AMP + diphosphate. Functionally, catalyzes the attachment of L-aspartate to tRNA(Asp) in a two-step reaction: L-aspartate is first activated by ATP to form Asp-AMP and then transferred to the acceptor end of tRNA(Asp). This Streptococcus suis (strain 98HAH33) protein is Aspartate--tRNA ligase.